Consider the following 364-residue polypeptide: Chorismate synthase (364 aa).

Arginine 47 contacts NADP(+). Residues 125-127 (RAS), glycine 288, 303-307 (KPTAT), and arginine 329 each bind FMN.

It belongs to the chorismate synthase family. Homotetramer. The cofactor is FMNH2.

It carries out the reaction 5-O-(1-carboxyvinyl)-3-phosphoshikimate = chorismate + phosphate. Its pathway is metabolic intermediate biosynthesis; chorismate biosynthesis; chorismate from D-erythrose 4-phosphate and phosphoenolpyruvate: step 7/7. Catalyzes the anti-1,4-elimination of the C-3 phosphate and the C-6 proR hydrogen from 5-enolpyruvylshikimate-3-phosphate (EPSP) to yield chorismate, which is the branch point compound that serves as the starting substrate for the three terminal pathways of aromatic amino acid biosynthesis. This reaction introduces a second double bond into the aromatic ring system. This chain is Chorismate synthase, found in Synechococcus sp. (strain CC9902).